The primary structure comprises 360 residues: Peptide chain release factor 1 (360 aa).

Q237 is subject to N5-methylglutamine.

Belongs to the prokaryotic/mitochondrial release factor family. Methylated by PrmC. Methylation increases the termination efficiency of RF1.

Its subcellular location is the cytoplasm. Its function is as follows. Peptide chain release factor 1 directs the termination of translation in response to the peptide chain termination codons UAG and UAA. This is Peptide chain release factor 1 from Pseudomonas savastanoi pv. phaseolicola (strain 1448A / Race 6) (Pseudomonas syringae pv. phaseolicola (strain 1448A / Race 6)).